A 210-amino-acid polypeptide reads, in one-letter code: MALELLTPFTKVELEEEKKESNRKQIGILGGNFNPIHNAHLVVADQVRQQLGLDQVLLMPECKPPHVDAKETIDEKHRLCMLELAIEDVEGLAIETCELERQGISYTYDTMLYLTEQHPDVDYYFIIGADMVDYLPKWHRIDELVKLVQFVGVQRPKYKAGTSYPVIWVDLPLMDISSSMIRDFIKKGRQPNYLLPKRVLDYITQEGLYQ.

Belongs to the NadD family.

The enzyme catalyses nicotinate beta-D-ribonucleotide + ATP + H(+) = deamido-NAD(+) + diphosphate. It functions in the pathway cofactor biosynthesis; NAD(+) biosynthesis; deamido-NAD(+) from nicotinate D-ribonucleotide: step 1/1. Its function is as follows. Catalyzes the reversible adenylation of nicotinate mononucleotide (NaMN) to nicotinic acid adenine dinucleotide (NaAD). The sequence is that of Probable nicotinate-nucleotide adenylyltransferase from Streptococcus pyogenes serotype M6 (strain ATCC BAA-946 / MGAS10394).